A 123-amino-acid polypeptide reads, in one-letter code: Putative membrane protein insertion efficiency factor (123 aa).

The disordered stretch occupies residues 1-23; it reads MGSCGGKHTGKGAPKPYSRNFTD.

Belongs to the UPF0161 family.

It is found in the cell inner membrane. Functionally, could be involved in insertion of integral membrane proteins into the membrane. This is Putative membrane protein insertion efficiency factor from Brucella ovis (strain ATCC 25840 / 63/290 / NCTC 10512).